We begin with the raw amino-acid sequence, 863 residues long: Probable beta-glucosidase A (863 aa).

A signal peptide spans Met-1–Ala-19. Residues Asn-65, Asn-214, and Asn-255 are each glycosylated (N-linked (GlcNAc...) asparagine). The active site involves Asp-283. Residues Asn-318, Asn-325, Asn-357, Asn-493, Asn-526, Asn-545, Asn-567, Asn-664, and Asn-715 are each glycosylated (N-linked (GlcNAc...) asparagine). The disordered stretch occupies residues Lys-720–Gly-754.

Belongs to the glycosyl hydrolase 3 family.

Its subcellular location is the secreted. The catalysed reaction is Hydrolysis of terminal, non-reducing beta-D-glucosyl residues with release of beta-D-glucose.. Its pathway is glycan metabolism; cellulose degradation. Functionally, beta-glucosidases are one of a number of cellulolytic enzymes involved in the degradation of cellulosic biomass. Catalyzes the last step releasing glucose from the inhibitory cellobiose. This is Probable beta-glucosidase A (bglA) from Emericella nidulans (strain FGSC A4 / ATCC 38163 / CBS 112.46 / NRRL 194 / M139) (Aspergillus nidulans).